The sequence spans 1032 residues: Integrin alpha-4 (1032 aa).

The signal sequence occupies residues 1-33 (MAWEARREPGPRRAAVRETVMLLLCLGVPTGRP). FG-GAP repeat units follow at residues 35-100 (NVDT…PGQT), 110-177 (NGEP…TELS), 185-237 (QDYV…KYKA), 238-291 (FLDK…EKEL), 292-351 (NILH…GAVM), 355-412 (ETNL…GISS), and 416-478 (QRIE…HPES). Residues 35 to 977 (NVDTESALLY…HHQRPKRYFT (943 aa)) lie on the Extracellular side of the membrane. N-linked (GlcNAc...) asparagine glycosylation is present at Asn-79. Residues Cys-91 and Cys-101 are joined by a disulfide bond. N-linked (GlcNAc...) asparagine glycosylation occurs at Asn-138. Disulfide bonds link Cys-144-Cys-165 and Cys-183-Cys-198. Residue Asn-229 is glycosylated (N-linked (GlcNAc...) asparagine). Ca(2+) contacts are provided by Asp-314, Asn-316, Asp-318, Asp-322, Asp-377, Asp-379, Asp-381, Asp-385, Asp-439, Asp-441, Asn-443, Tyr-445, and Asp-447. An N-linked (GlcNAc...) asparagine glycan is attached at Asn-480. Cystine bridges form between Cys-486-Cys-495 and Cys-501-Cys-557. Residues Asn-518 and Asn-538 are each glycosylated (N-linked (GlcNAc...) asparagine). Residues 606-616 (KKEKDIMKKTI) carry the SG1 motif. The cysteines at positions 622 and 627 are disulfide-linked. 3 N-linked (GlcNAc...) asparagine glycosylation sites follow: Asn-626, Asn-645, and Asn-660. Cysteines 698 and 711 form a disulfide. Residues Asn-806 and Asn-821 are each glycosylated (N-linked (GlcNAc...) asparagine). Intrachain disulfides connect Cys-852–Cys-890 and Cys-897–Cys-902. A helical transmembrane segment spans residues 978–1001 (IVIISSSLLLGLIVLLLISYVMWK). Over 1002 to 1032 (AGFFKRQYKSILQEENRRDSWSYINSKSNDD) the chain is Cytoplasmic. The GFFKR motif motif lies at 1003 to 1007 (GFFKR). Phosphoserine is present on Ser-1021.

Belongs to the integrin alpha chain family. As to quaternary structure, heterodimer of an alpha and a beta subunit. The alpha subunit can sometimes be cleaved into two non-covalently associated fragments. Alpha-4 associates with either beta-1 or beta-7. Alpha-4 interacts with PXN, LPXN, and TGFB1I1/HIC5. Interacts with CSPG4 through CSPG4 chondroitin sulfate glycosaminoglycan. Interacts with JAML; integrin alpha-4/beta-1 may regulate leukocyte to endothelial cells adhesion by controlling JAML homodimerization. ITGA4:ITGB1 is found in a ternary complex with CX3CR1 and CX3CL1. Interacts with MDK. ITGA4:ITGB1 interacts with MDK; this interaction mediates MDK-induced osteoblast cells migration through PXN phosphorylation. Integrin ITGA4:ITGB1 interacts with SVEP1 (via Sushi domain 21); thereby inhibits Ca(2+) intracellular signaling and as a result represses vasocontraction. ITGA4:ITGB1 interacts with SELP. ITGA4:ITGB1 interacts with BCAM. Phosphorylation on Ser-1027 inhibits PXN binding. In terms of tissue distribution, expressed in vascular smooth muscle cells (at protein level).

The protein resides in the membrane. In terms of biological role, integrins alpha-4/beta-1 (VLA-4) and alpha-4/beta-7 are receptors for fibronectin. They recognize one or more domains within the alternatively spliced CS-1 and CS-5 regions of fibronectin. They are also receptors for VCAM1. Integrin alpha-4/beta-1 recognizes the sequence Q-I-D-S in VCAM1. Integrin alpha-4/beta-7 is also a receptor for MADCAM1. It recognizes the sequence L-D-T in MADCAM1. On activated endothelial cells integrin VLA-4 triggers homotypic aggregation for most VLA-4-positive leukocyte cell lines. It may also participate in cytolytic T-cell interactions with target cells. ITGA4:ITGB1 binds to fractalkine (CX3CL1) and may act as its coreceptor in CX3CR1-dependent fractalkine signaling. ITGA4:ITGB1 binds to PLA2G2A via a site (site 2) which is distinct from the classical ligand-binding site (site 1) and this induces integrin conformational changes and enhanced ligand binding to site 1. Integrin ITGA4:ITGB1 represses PRKCA-mediated L-type voltage-gated channel Ca(2+) influx and ROCK-mediated calcium sensitivity in vascular smooth muscle cells via its interaction with SVEP1, thereby inhibiting vasocontraction. The polypeptide is Integrin alpha-4 (ITGA4) (Homo sapiens (Human)).